The primary structure comprises 367 residues: 3-isopropylmalate dehydrogenase (367 aa).

77-90 (GPKYDDLDFSVKPE) lines the NAD(+) pocket. Residues arginine 97, arginine 107, arginine 135, and aspartate 224 each coordinate substrate. Mg(2+)-binding residues include aspartate 224, aspartate 248, and aspartate 252. Position 287–299 (287–299 (GSAPDIAGQGKAN)) interacts with NAD(+).

This sequence belongs to the isocitrate and isopropylmalate dehydrogenases family. LeuB type 1 subfamily. As to quaternary structure, homodimer. The cofactor is Mg(2+). Mn(2+) is required as a cofactor.

The protein resides in the cytoplasm. It carries out the reaction (2R,3S)-3-isopropylmalate + NAD(+) = 4-methyl-2-oxopentanoate + CO2 + NADH. Its pathway is amino-acid biosynthesis; L-leucine biosynthesis; L-leucine from 3-methyl-2-oxobutanoate: step 3/4. Its function is as follows. Catalyzes the oxidation of 3-carboxy-2-hydroxy-4-methylpentanoate (3-isopropylmalate) to 3-carboxy-4-methyl-2-oxopentanoate. The product decarboxylates to 4-methyl-2 oxopentanoate. In Ruegeria pomeroyi (strain ATCC 700808 / DSM 15171 / DSS-3) (Silicibacter pomeroyi), this protein is 3-isopropylmalate dehydrogenase.